A 249-amino-acid chain; its full sequence is Proteasome activator complex subunit 1 (249 aa).

The segment at 55–102 (SNLKAPLDIPVPDPVKEKEKEERRKQQEKEDKDEKKKGEDEDKGPPCG) is disordered. The segment covering 68-98 (PVKEKEKEERRKQQEKEDKDEKKKGEDEDKG) has biased composition (basic and acidic residues).

This sequence belongs to the PA28 family. As to quaternary structure, heterodimer of PSME1 and PSME2, which forms a hexameric ring. PSME1 can form homoheptamers.

Its function is as follows. Implicated in immunoproteasome assembly and required for efficient antigen processing. The PA28 activator complex enhances the generation of class I binding peptides by altering the cleavage pattern of the proteasome. The chain is Proteasome activator complex subunit 1 (PSME1) from Bos taurus (Bovine).